Reading from the N-terminus, the 284-residue chain is 4-diphosphocytidyl-2-C-methyl-D-erythritol kinase (284 aa).

The active site involves Lys9. 90 to 100 serves as a coordination point for ATP; that stretch reads PLVSGLGGDSS. Residue Asp132 is part of the active site.

Belongs to the GHMP kinase family. IspE subfamily.

The catalysed reaction is 4-CDP-2-C-methyl-D-erythritol + ATP = 4-CDP-2-C-methyl-D-erythritol 2-phosphate + ADP + H(+). The protein operates within isoprenoid biosynthesis; isopentenyl diphosphate biosynthesis via DXP pathway; isopentenyl diphosphate from 1-deoxy-D-xylulose 5-phosphate: step 3/6. Catalyzes the phosphorylation of the position 2 hydroxy group of 4-diphosphocytidyl-2C-methyl-D-erythritol. This Dehalococcoides mccartyi (strain ATCC BAA-2100 / JCM 16839 / KCTC 5957 / BAV1) protein is 4-diphosphocytidyl-2-C-methyl-D-erythritol kinase.